The chain runs to 329 residues: Bifunctional nuclease 2 (329 aa).

Positions 121–256 (CVHNNPQGGN…YLAYSDGMRV (136 aa)) constitute a BFN domain. Residues 287 to 322 (DTKEFDLVRNMMQAVDEERYDEAAEWRDKLGKFQAK) enclose the UVR domain.

Belongs to the bifunctional nuclease family.

The protein localises to the nucleus. Bifunctional nuclease with both RNase and DNase activities. Involved in basal defense response. Participates in abscisic acid-derived callose deposition following infection by a necrotrophic pathogen. The sequence is that of Bifunctional nuclease 2 (BBD2) from Arabidopsis thaliana (Mouse-ear cress).